Consider the following 95-residue polypeptide: Small ribosomal subunit protein bS20 (95 aa).

This sequence belongs to the bacterial ribosomal protein bS20 family.

Functionally, binds directly to 16S ribosomal RNA. The chain is Small ribosomal subunit protein bS20 from Ehrlichia chaffeensis (strain ATCC CRL-10679 / Arkansas).